The sequence spans 93 residues: Alpha-defensin 10 (93 aa).

The N-terminal stretch at 1-19 is a signal peptide; that stretch reads MKTLVLLSALVLLAFQVQA. A propeptide spanning residues 20 to 58 is cleaved from the precursor; sequence DPIQNTDEETKTEEQPGEDDQAVSVSFGDPEGSSLQEES. A disordered region spans residues 22 to 56; it reads IQNTDEETKTEEQPGEDDQAVSVSFGDPEGSSLQE. Intrachain disulfides connect Cys64–Cys92, Cys66–Cys81, and Cys71–Cys91.

This sequence belongs to the alpha-defensin family. As to expression, paneth cells of the small bowel.

The protein localises to the secreted. Probably contributes to the antimicrobial barrier function of the small bowel mucosa. This is Alpha-defensin 10 (Defa10) from Mus musculus (Mouse).